Reading from the N-terminus, the 241-residue chain is 1-(5-phosphoribosyl)-5-[(5-phosphoribosylamino)methylideneamino] imidazole-4-carboxamide isomerase (241 aa).

The Proton acceptor role is filled by Asp10. Asp131 serves as the catalytic Proton donor.

Belongs to the HisA/HisF family.

Its subcellular location is the cytoplasm. The catalysed reaction is 1-(5-phospho-beta-D-ribosyl)-5-[(5-phospho-beta-D-ribosylamino)methylideneamino]imidazole-4-carboxamide = 5-[(5-phospho-1-deoxy-D-ribulos-1-ylimino)methylamino]-1-(5-phospho-beta-D-ribosyl)imidazole-4-carboxamide. It functions in the pathway amino-acid biosynthesis; L-histidine biosynthesis; L-histidine from 5-phospho-alpha-D-ribose 1-diphosphate: step 4/9. The polypeptide is 1-(5-phosphoribosyl)-5-[(5-phosphoribosylamino)methylideneamino] imidazole-4-carboxamide isomerase (Hyphomonas neptunium (strain ATCC 15444)).